The sequence spans 451 residues: FAD-dependent monooxygenase adrH (451 aa).

FAD is bound by residues Glu-39, Gly-53, and Arg-112. Tyr-196 is an active-site residue. 2 residues coordinate FAD: Asp-288 and Ala-301. A glycan (N-linked (GlcNAc...) asparagine) is linked at Asn-385. Residues 426–446 (TLLWVSSLALFLFFPWLGSYL) form a helical membrane-spanning segment.

This sequence belongs to the paxM FAD-dependent monooxygenase family. FAD is required as a cofactor.

Its subcellular location is the membrane. It functions in the pathway secondary metabolite biosynthesis; terpenoid biosynthesis. Its function is as follows. FAD-dependent monooxygenase; part of the gene cluster that mediates the biosynthesis of andrastins, meroterpenoid compounds that exhibit inhibitory activity against ras farnesyltransferase, suggesting that they could be promising leads for antitumor agents. The first step of the pathway is the synthesis of 3,5-dimethylorsellinic acid (DMOA) by the polyketide synthase adrD via condensation of one acetyl-CoA starter unit with 3 malonyl-CoA units and 2 methylations. DMAO is then converted to farnesyl-DMAO by the prenyltransferase adrG. The methyltransferase adrK catalyzes the methylation of the carboxyl group of farnesyl-DMAO to farnesyl-DMAO methyl ester which is further converted to epoxyfarnesyl-DMAO methyl ester by the FAD-dependent monooxygenase adrH. The terpene cyclase adrI then catalyzes the carbon skeletal rearrangement to generate the andrastin E, the first compound in the pathway having the andrastin scaffold, with the tetracyclic ring system. The post-cyclization tailoring enzymes adrF, adrE, adrJ, and adrA, are involved in the conversion of andrastin E into andrastin A. The short chain dehydrogenase adrF is responsible for the oxidation of the C-3 a hydroxyl group of andrastin E to yield the corresponding ketone, andrastin D. The ketoreductase adrE stereoselectively reduces the carbonyl moiety to reverse the stereochemistry of the C-3 position to yield andrastin F. The acetyltransferase adrJ is the acetyltransferase that attaches the acetyl group to the C-3 hydroxyl group of andrastin F to yield andrastin C. Finally, the cytochrome P450 monooxygenase adrA catalyzes two sequential oxidation reactions of the C-23 methyl group, to generate the corresponding alcohol andrastin B, and aldehyde andrastin A. In Penicillium rubens (strain ATCC 28089 / DSM 1075 / NRRL 1951 / Wisconsin 54-1255) (Penicillium chrysogenum), this protein is FAD-dependent monooxygenase adrH.